A 114-amino-acid polypeptide reads, in one-letter code: C-X-C motif chemokine 5 (114 aa).

Positions 1 to 36 (MSLLSSRAARVPGPSSSLCALLVLLLLLTQPGPIAS) are cleaved as a signal peptide. 2 cysteine pairs are disulfide-bonded: C49–C75 and C51–C91.

It belongs to the intercrine alpha (chemokine CxC) family. In terms of assembly, monomer. Homodimer. N-terminal processed forms ENA-78(8-78) and ENA-78(9-78) are produced by proteolytic cleavage after secretion from peripheral blood monocytes.

It is found in the secreted. Functionally, involved in neutrophil activation. In vitro, ENA-78(8-78) and ENA-78(9-78) show a threefold higher chemotactic activity for neutrophil granulocytes. This Homo sapiens (Human) protein is C-X-C motif chemokine 5 (CXCL5).